A 526-amino-acid chain; its full sequence is Tyrosine 2,3-aminomutase (526 aa).

Residue Y41 is the Proton donor/acceptor of the active site. Substrate is bound at residue H71. A cross-link (5-imidazolinone (Ala-Gly)) is located at residues 130 to 132 (ASG). The residue at position 131 (S131) is a 2,3-didehydroalanine (Ser). Substrate is bound by residues N183 and R288.

Belongs to the TAL/TAM family. In terms of assembly, homotetramer; dimer of dimers. Contains an active site 4-methylidene-imidazol-5-one (MIO), which is formed autocatalytically by cyclization and dehydration of residues Ala-Ser-Gly.

It catalyses the reaction L-tyrosine = 3-amino-3-(4-hydroxyphenyl)propanoate. The enzyme catalyses L-tyrosine = (E)-4-coumarate + NH4(+). Its function is as follows. Has aminomutase and, to a much lesser extent, ammonia-lyase activity. Primarily, catalyzes the rearrangement of L-tyrosine to S-beta-tyrosine, which is probably incorporated into secondary metabolite myxovalargin. The aminomutase activity exclusively produces S-beta-tyrosine. The protein is Tyrosine 2,3-aminomutase of Myxococcus sp. (strain Mx-B0).